We begin with the raw amino-acid sequence, 333 residues long: Probable pyridoxal reductase 2 (333 aa).

The active-site Proton donor is the Tyr52.

Belongs to the aldo/keto reductase family.

It is found in the cytoplasm. The enzyme catalyses pyridoxine + NADP(+) = pyridoxal + NADPH + H(+). Functionally, catalyzes the reduction of pyridoxal (PL) with NADPH and oxidation of pyridoxine (PN) with NADP(+). This chain is Probable pyridoxal reductase 2, found in Schizosaccharomyces pombe (strain 972 / ATCC 24843) (Fission yeast).